Reading from the N-terminus, the 402-residue chain is Xylose/arabinose-binding protein XylF (402 aa).

The helical transmembrane segment at 38–58 (GIIAGVLAAFGAGFGSGYVTA) threads the bilayer.

The protein belongs to the bacterial solute-binding protein 2 family. In terms of assembly, the complex is composed of two ATP-binding proteins (XylG), two transmembrane proteins (XylH) and a solute-binding protein (XylF).

The protein resides in the cell membrane. Part of the ABC transporter complex XylFGH involved in the uptake of xylose and arabinose. The sequence is that of Xylose/arabinose-binding protein XylF from Sulfolobus acidocaldarius (strain ATCC 33909 / DSM 639 / JCM 8929 / NBRC 15157 / NCIMB 11770).